The primary structure comprises 336 residues: Aspartate--ammonia ligase (336 aa).

It belongs to the class-II aminoacyl-tRNA synthetase family. AsnA subfamily.

Its subcellular location is the cytoplasm. The catalysed reaction is L-aspartate + NH4(+) + ATP = L-asparagine + AMP + diphosphate + H(+). Its pathway is amino-acid biosynthesis; L-asparagine biosynthesis; L-asparagine from L-aspartate (ammonia route): step 1/1. In Clostridium perfringens (strain 13 / Type A), this protein is Aspartate--ammonia ligase.